The sequence spans 853 residues: DNA mismatch repair protein MutS (853 aa).

614–621 serves as a coordination point for ATP; that stretch reads GPNMGGKS.

It belongs to the DNA mismatch repair MutS family.

Functionally, this protein is involved in the repair of mismatches in DNA. It is possible that it carries out the mismatch recognition step. This protein has a weak ATPase activity. In Escherichia coli O1:K1 / APEC, this protein is DNA mismatch repair protein MutS.